Reading from the N-terminus, the 142-residue chain is Arginine decarboxylase proenzyme (142 aa).

Residue S81 is the Schiff-base intermediate with substrate; via pyruvic acid of the active site. S81 is modified (pyruvic acid (Ser); by autocatalysis). The active-site Proton acceptor; for processing activity is the H86. C101 functions as the Proton donor; for catalytic activity in the catalytic mechanism.

This sequence belongs to the prokaryotic AdoMetDC family. Type 1 subfamily. As to quaternary structure, heterooctamer of four alpha and four beta chains arranged as a tetramer of alpha/beta heterodimers. It depends on pyruvate as a cofactor. Is synthesized initially as an inactive proenzyme. Formation of the active enzyme involves a self-maturation process in which the active site pyruvoyl group is generated from an internal serine residue via an autocatalytic post-translational modification. Two non-identical subunits are generated from the proenzyme in this reaction, and the pyruvate is formed at the N-terminus of the alpha chain, which is derived from the carboxyl end of the proenzyme. The post-translation cleavage follows an unusual pathway, termed non-hydrolytic serinolysis, in which the side chain hydroxyl group of the serine supplies its oxygen atom to form the C-terminus of the beta chain, while the remainder of the serine residue undergoes an oxidative deamination to produce ammonia and the pyruvoyl group blocking the N-terminus of the alpha chain.

The catalysed reaction is L-arginine + H(+) = agmatine + CO2. Its pathway is amine and polyamine biosynthesis; agmatine biosynthesis; agmatine from L-arginine: step 1/1. Specifically catalyzes the decarboxylation of L-arginine to agmatine. Has no S-adenosylmethionine decarboxylase (AdoMetDC) activity. This Hyperthermus butylicus (strain DSM 5456 / JCM 9403 / PLM1-5) protein is Arginine decarboxylase proenzyme.